The primary structure comprises 201 residues: Recombination protein RecR (201 aa).

The C4-type zinc finger occupies cysteine 60–cysteine 75. In terms of domain architecture, Toprim spans serine 83–proline 178.

The protein belongs to the RecR family.

May play a role in DNA repair. It seems to be involved in an RecBC-independent recombinational process of DNA repair. It may act with RecF and RecO. In Rhizobium johnstonii (strain DSM 114642 / LMG 32736 / 3841) (Rhizobium leguminosarum bv. viciae), this protein is Recombination protein RecR.